Here is a 127-residue protein sequence, read N- to C-terminus: Large ribosomal subunit protein bL17 (127 aa).

This sequence belongs to the bacterial ribosomal protein bL17 family. Part of the 50S ribosomal subunit. Contacts protein L32.

This chain is Large ribosomal subunit protein bL17, found in Xanthomonas oryzae pv. oryzae (strain KACC10331 / KXO85).